The following is a 396-amino-acid chain: MTTLNPYFGEFGGMYVPQILVPALKQLEDAFVSAQLDPEFQAAFQDLLKNYAGRPTALTLCQNLTKGTKTKLYLKREDLLHGGAHKTNQVLGQALLAKRMGKTEIIAETGAGQHGVASALACALLGLKCRIYMGAKDIERQSPNVFRMRLMGAEVIPVHSGSSTLKDACNEALRDWSGTYETAHYMLGTAAGPHPYPTIVREFQRMIGEETKAQILEKEGRLPDAVLACVGGGSNAIGMFADFIDEPDVGLIGVEPAGLGIETGQHGAPLKHGKVGIYFGMKSPMMQTSDGQIEESYSISAGLDFPSVGPQHAYLNSIGRADYVSITDDEALDAFKTLSCKEGIIPALESSHALAHALKMIKADPDKEQILVVNLSGRGDKDIFTVHDILKARGEI.

Residue lysine 86 is modified to N6-(pyridoxal phosphate)lysine.

It belongs to the TrpB family. Tetramer of two alpha and two beta chains. Pyridoxal 5'-phosphate is required as a cofactor.

The catalysed reaction is (1S,2R)-1-C-(indol-3-yl)glycerol 3-phosphate + L-serine = D-glyceraldehyde 3-phosphate + L-tryptophan + H2O. It functions in the pathway amino-acid biosynthesis; L-tryptophan biosynthesis; L-tryptophan from chorismate: step 5/5. The beta subunit is responsible for the synthesis of L-tryptophan from indole and L-serine. This chain is Tryptophan synthase beta chain, found in Yersinia pseudotuberculosis serotype O:1b (strain IP 31758).